The following is a 1790-amino-acid chain: MDIIQGLIQQPKIQSVDETIPTLCDRVENSTLISDRRSAVLGLKAFSRQYRESVIASGLKPLLNTLKRDYMDEDSVKAILETILILFIRGDGHDDLTRGWISQQSRLQNGKYPSPLVMKQEKEQVDQFSLWIADALTQSEDLIHLLVEFWEIDNFHIRLYTIQLLEAVMATRPLKARSALISLPTSISTMVSLLDDMHEPIRDEAILLLMAVVNDSPHVQKLVAFENIFERLFSIIEEEGGLRGSLVVNDCLSLINNILKYNTSNQTLFLETGNLPKLAHLLSEPISQDEVFFWNDQRIVNINTALDIVSLTVEPGNTVTTKHQNALLDSSVLMVVLRLAFFHNIPKKVRPVALLTAANMVRSNEHAQLEFSKIDVPYFDPSLPVNSTANGGPIKLIPVVSILINWMLYANSVHTFDTRVACSRLLKAYFMDNFDLQRDFLLKQVQLCNNSTNNVGDNAKENGGSNKSDKESDSDKDTDGKDGTEYEGSFKANLFEVLLNYDAELNLNPFKLFFTTDIFMFFFQQDHKYSEELREITRNVTTGNDLEDEEPLKAIQTISELLTTSLTAADIRIPISYLTFLIYWLFGDFKATNDFLSDKSVIKSLLSFSYQIQDEDVTIKCLVTMLLGVAYEFSSKESPFPRKEYFEFITKTLGKDNYASRIKQFKKDSYFSKVDMNEDSILTPELDETGLPKVYFSTYFIQLFNENIYRIRTALSHDPDEEPINKISFEEVEKLQRQCTKLKGEITSLQTETESTHENLTEKLIALTNEHKELDEKYQILNSSHSSLKENFSILETELKNVRDSLDEMTQLRDVLETKDKENQTALLEYKSTIHKQEDSIKTLEKGLETILSQKKKAEDGINKMGKDLFALSREMQAVEENCKNLQKEKDKSNVNHQKETKSLKEDIAAKITEIKAINENLEEMKIQCNNLSKEKEHISKELVEYKSRFQSHDNLVAKLTEKLKSLANNYKDMQAENESLIKAVEESKNESSIQLSNLQNKIDSMSQEKENFQIERGSIEKNIEQLKKTISDLEQTKEEIISKSDSSKDEYESQISLLKEKLETATTANDENVNKISELTKTREELEAELAAYKNLKNELETKLETSEKALKEVKENEEHLKEEKIQLEKEATETKQQLNSLRANLESLEKEHEDLAAQLKKYEEQIANKERQYNEEISQLNDEITSTQQENESIKKKNDELEGEVKAMKSTSEEQSNLKKSEIDALNLQIKELKKKNETNEASLLESIKSVESETVKIKELQDECNFKEKEVSELEDKLKASEDKNSKYLELQKESEKIKEELDAKTTELKIQLEKITNLSKAKEKSESELSRLKKTSSEERKNAEEQLEKLKNEIQIKNQAFEKERKLLNEGSSTITQEYSEKINTLEDELIRLQNENELKAKEIDNTRSELEKVSLSNDELLEEKQNTIKSLQDEILSYKDKITRNDEKLLSIERDNKRDLESLKEQLRAAQESKAKVEEGLKKLEEESSKEKAELEKSKEMMKKLESTIESNETELKSSMETIRKSDEKLEQSKKSAEEDIKNLQHEKSDLISRINESEKDIEELKSKLRIEAKSGSELETVKQELNNAQEKIRINAEENTVLKSKLEDIERELKDKQAEIKSNQEEKELLTSRLKELEQELDSTQQKAQKSEEERRAEVRKFQVEKSQLDEKAMLLETKYNDLVNKEQAWKRDEDTVKKTTDSQRQEIEKLAKELDNLKAENSKLKEANEDRSEIDDLMLLVTDLDEKNAKYRSKLKDLGVEISSDEEDDEEDDEEDEEEGQVA.

A globular head region spans residues 1–724 (MDIIQGLIQQ…LSHDPDEEPI (724 aa)). ARM repeat units lie at residues 45–89 (AFSR…LFIR), 127–170 (QFSL…AVMA), 173–213 (PLKA…MAVV), 215–260 (DSPH…NILK), 261–312 (YNTS…VSLT), 314–362 (EPGN…NMVR), 363–429 (SNEH…LKAY), 431–512 (MDNF…PFKL), 543–584 (GNDL…LIYW), and 586–630 (FGDF…LGVA). The tract at residues 452–484 (TNNVGDNAKENGGSNKSDKESDSDKDTDGKDGT) is disordered. Residues 465–487 (SNKSDKESDSDKDTDGKDGTEYE) are charged (hyper-hydrophilic). The segment covering 467–484 (KSDKESDSDKDTDGKDGT) has biased composition (basic and acidic residues). A coiled-coil region spans residues 725-1790 (NKISFEEVEK…EEDEEEGQVA (1066 aa)). The tract at residues 991-1790 (ESSIQLSNLQ…EEDEEEGQVA (800 aa)) is dispensable for the protein function. 6 disordered regions span residues 1185 to 1221 (EITS…SNLK), 1326 to 1351 (KEKS…EEQL), 1485 to 1547 (GLKK…EDIK), 1645 to 1667 (QELD…EVRK), 1722 to 1742 (DNLK…SEID), and 1762 to 1790 (LKDL…GQVA). Residues 1194-1209 (ESIKKKNDELEGEVKA) show a composition bias toward basic and acidic residues. 4 stretches are compositionally biased toward basic and acidic residues: residues 1485–1512 (GLKK…KLES), 1519–1547 (TELK…EDIK), 1655–1667 (QKSE…EVRK), and 1722–1738 (DNLK…NEDR). Serine 1770 carries the post-translational modification Phosphoserine. The segment covering 1770–1790 (SSDEEDDEEDDEEDEEEGQVA) has biased composition (acidic residues).

This sequence belongs to the VDP/USO1/EDE1 family. As to quaternary structure, homodimer. Dimerizes by parallel association of the tails, resulting in an elongated structure with two globular head domains side by side, and a long rod-like tail structure.

It is found in the cytoplasm. The protein resides in the cytoskeleton. The protein localises to the cytoplasmic vesicle membrane. Its subcellular location is the endoplasmic reticulum membrane. It localises to the golgi apparatus membrane. In terms of biological role, required for protein transport from the ER to the Golgi complex. The chain is Intracellular protein transport protein USO1 (USO1) from Saccharomyces cerevisiae (strain ATCC 204508 / S288c) (Baker's yeast).